The primary structure comprises 122 residues: Acidic phospholipase A2 homolog vipoxin A chain (122 aa).

7 disulfides stabilise this stretch: cysteine 26/cysteine 115, cysteine 28/cysteine 44, cysteine 43/cysteine 95, cysteine 49/cysteine 122, cysteine 50/cysteine 88, cysteine 57/cysteine 81, and cysteine 75/cysteine 86.

Belongs to the phospholipase A2 family. Group II subfamily. D49 sub-subfamily. As to quaternary structure, heterodimer of A and B (AC P14420) chains; non-covalently linked. The A chain (acidic) is non-toxic, and increases the toxicity of the B chain (basic). The A chain may act as factor stabilizing the complex structure and hence retaining its toxicity by preventing non-specific binding. Upon binding to the target membranes the A chain may dissociate. In terms of tissue distribution, expressed by the venom gland.

The protein localises to the secreted. In terms of biological role, heterodimer: postsynaptic neurotoxin. Monomer: Acidic phospholipase A2 homolog that is non-toxic. This is Acidic phospholipase A2 homolog vipoxin A chain from Vipera ammodytes meridionalis (Eastern sand viper).